A 550-amino-acid chain; its full sequence is 2-succinyl-5-enolpyruvyl-6-hydroxy-3-cyclohexene-1-carboxylate synthase (550 aa).

The protein belongs to the TPP enzyme family. MenD subfamily. In terms of assembly, homodimer. Requires Mg(2+) as cofactor. Mn(2+) is required as a cofactor. It depends on thiamine diphosphate as a cofactor.

It catalyses the reaction isochorismate + 2-oxoglutarate + H(+) = 5-enolpyruvoyl-6-hydroxy-2-succinyl-cyclohex-3-ene-1-carboxylate + CO2. It participates in quinol/quinone metabolism; 1,4-dihydroxy-2-naphthoate biosynthesis; 1,4-dihydroxy-2-naphthoate from chorismate: step 2/7. The protein operates within quinol/quinone metabolism; menaquinone biosynthesis. Functionally, catalyzes the thiamine diphosphate-dependent decarboxylation of 2-oxoglutarate and the subsequent addition of the resulting succinic semialdehyde-thiamine pyrophosphate anion to isochorismate to yield 2-succinyl-5-enolpyruvyl-6-hydroxy-3-cyclohexene-1-carboxylate (SEPHCHC). The protein is 2-succinyl-5-enolpyruvyl-6-hydroxy-3-cyclohexene-1-carboxylate synthase of Desulfitobacterium hafniense (strain DSM 10664 / DCB-2).